The primary structure comprises 166 residues: Vasopressin-neurophysin 2-copeptin (166 aa).

The N-terminal stretch at 1–19 (MPDATLPACFLGLLALTSA) is a signal peptide. Cysteine 20 and cysteine 25 are joined by a disulfide. Glycine 28 is subject to Glycine amide. 7 cysteine pairs are disulfide-bonded: cysteine 41–cysteine 85, cysteine 44–cysteine 58, cysteine 52–cysteine 75, cysteine 59–cysteine 65, cysteine 92–cysteine 104, cysteine 98–cysteine 116, and cysteine 105–cysteine 110. Asparagine 133 carries an N-linked (GlcNAc...) asparagine glycan.

The protein belongs to the vasopressin/oxytocin family. Interacts with vasopressin receptors V1bR/AVPR1B (Ki=85 pM), V1aR/AVPR1A (Ki=0.6 nM) and V2R/AVPR2 (Ki=4.9 nM). Interacts with oxytocin receptor (OXTR) (Ki=110 nM). A shorter neurophysin molecule (32-123) is called neurophysin-I and is derived from the complete protein (called neurophysin III) by proteolytic degradation (in vivo or after extraction).

The protein localises to the secreted. Neurophysin 2 specifically binds vasopressin. Functionally, vasopressin has a direct antidiuretic action on the kidney, it also causes vasoconstriction of the peripheral vessels. Acts by binding to vasopressin receptors (V1bR/AVPR1B, V1aR/AVPR1A, and V2R/AVPR2). The sequence is that of Vasopressin-neurophysin 2-copeptin (AVP) from Sus scrofa (Pig).